The sequence spans 81 residues: Photosystem I iron-sulfur center (81 aa).

4Fe-4S ferredoxin-type domains follow at residues 2 to 31 (AHTV…MVPW) and 39 to 68 (MASA…IRVY). Residues cysteine 11, cysteine 14, cysteine 17, cysteine 21, cysteine 48, cysteine 51, cysteine 54, and cysteine 58 each contribute to the [4Fe-4S] cluster site.

The eukaryotic PSI reaction center is composed of at least 11 subunits. [4Fe-4S] cluster serves as cofactor.

Its subcellular location is the plastid. It is found in the chloroplast thylakoid membrane. It carries out the reaction reduced [plastocyanin] + hnu + oxidized [2Fe-2S]-[ferredoxin] = oxidized [plastocyanin] + reduced [2Fe-2S]-[ferredoxin]. Functionally, apoprotein for the two 4Fe-4S centers FA and FB of photosystem I (PSI); essential for photochemical activity. FB is the terminal electron acceptor of PSI, donating electrons to ferredoxin. The C-terminus interacts with PsaA/B/D and helps assemble the protein into the PSI complex. Required for binding of PsaD and PsaE to PSI. PSI is a plastocyanin/cytochrome c6-ferredoxin oxidoreductase, converting photonic excitation into a charge separation, which transfers an electron from the donor P700 chlorophyll pair to the spectroscopically characterized acceptors A0, A1, FX, FA and FB in turn. The polypeptide is Photosystem I iron-sulfur center (Cyanidioschyzon merolae (strain NIES-3377 / 10D) (Unicellular red alga)).